The primary structure comprises 84 residues: AIFKSYCEIIVTHFPFDEQNCSMKLGTWTYDSSVVVINPESDQPDLSNFMESGEWVIKEARGWKHNVTYACCLTTHYLDITYHF.

A disulfide bond links C7 and C21. N20 and N66 each carry an N-linked (GlcNAc...) asparagine glycan. The cysteines at positions 71 and 72 are disulfide-linked.

It belongs to the ligand-gated ion channel (TC 1.A.9) family. Acetylcholine receptor (TC 1.A.9.1) subfamily. Alpha-1/CHRNA1 sub-subfamily. One of the alpha chains that assemble within the acetylcholine receptor, a pentamer of two alpha chains, a beta, a delta, and a gamma (in immature muscle) or epsilon (in mature muscle) chains. The muscle heteropentamer composed of alpha-1, beta-1, delta, epsilon subunits interacts with the alpha-conotoxin ImII.

It is found in the postsynaptic cell membrane. Its subcellular location is the cell membrane. The catalysed reaction is K(+)(in) = K(+)(out). It catalyses the reaction Na(+)(in) = Na(+)(out). Its function is as follows. Upon acetylcholine binding, the AChR responds by an extensive change in conformation that affects all subunits and leads to opening of an ion-conducting channel across the plasma membrane. The chain is Acetylcholine receptor subunit alpha (CHRNA1) from Herpestes ichneumon (Egyptian mongoose).